Reading from the N-terminus, the 452-residue chain is MYSINEVLETIRMVQEENLDIRTITMGISLRDCADANAAKACQRIYDKITTQAANLVKAGEEIEREYGIPIINKRISVTPISLVAESSDANNYTPFAEAMDRAAKEVGVNFIGGFSALVHKGFTKGDRILINSIPEALATTERVCSSVNVGSTKDGINMDAVYRMGQVVKECAERTADKDGLACAKLVVFCNVPEDNPFMAGAFHGIGEAECVINVGVSGPGVVKNAVEKVKGTDFGTLAETVKKTAFKITRMGELVGRAAAKKLGVPFGIVDLSLAPTPAVGDSVAEVLEAMGLECCGTHGTTAALALLNDAVKKGGAMASSYVGGLSGAFIPLSEDAGMIRAAECGILTLEKLEAMTCVCSVGLDMIAIPGDTTAETLAAIIADEMAIGMVNFKTTAVRIIPAPGKTVGDRVEFGGLLGHAPIIPVKQAGAQEFVTRGGRIPAPIQSLKN.

It belongs to the UPF0210 family. In terms of assembly, homodimer.

This is UPF0210 protein Dred_1672 from Desulforamulus reducens (strain ATCC BAA-1160 / DSM 100696 / MI-1) (Desulfotomaculum reducens).